We begin with the raw amino-acid sequence, 186 residues long: UPF0301 protein Mmc1_0726 (186 aa).

Belongs to the UPF0301 (AlgH) family.

The polypeptide is UPF0301 protein Mmc1_0726 (Magnetococcus marinus (strain ATCC BAA-1437 / JCM 17883 / MC-1)).